Reading from the N-terminus, the 358-residue chain is 3-isopropylmalate dehydrogenase (358 aa).

Residue 77 to 90 (GPKWTNLPPDQQPE) participates in NAD(+) binding. Residues Arg98, Arg108, Arg137, and Asp226 each contribute to the substrate site. Residues Asp226, Asp250, and Asp254 each contribute to the Mg(2+) site. 284–296 (GSAPDIAGKGIAN) is a binding site for NAD(+).

This sequence belongs to the isocitrate and isopropylmalate dehydrogenases family. LeuB type 1 subfamily. As to quaternary structure, homodimer. Mg(2+) is required as a cofactor. Mn(2+) serves as cofactor.

The protein localises to the cytoplasm. It carries out the reaction (2R,3S)-3-isopropylmalate + NAD(+) = 4-methyl-2-oxopentanoate + CO2 + NADH. The protein operates within amino-acid biosynthesis; L-leucine biosynthesis; L-leucine from 3-methyl-2-oxobutanoate: step 3/4. Functionally, catalyzes the oxidation of 3-carboxy-2-hydroxy-4-methylpentanoate (3-isopropylmalate) to 3-carboxy-4-methyl-2-oxopentanoate. The product decarboxylates to 4-methyl-2 oxopentanoate. This Haemophilus influenzae (strain 86-028NP) protein is 3-isopropylmalate dehydrogenase.